A 647-amino-acid chain; its full sequence is Shugoshin-2 (647 aa).

Serine 7 carries the phosphoserine modification. Coiled-coil stretches lie at residues 28-87 (SKAQ…FHEE) and 125-145 (DEES…HDVS). Positions 171–295 (REANVFSDTQ…DTVIQSTPTK (125 aa)) are disordered. Over residues 200–210 (NLSNSKPVNNN) the composition is skewed to low complexity. Serine 240 is modified (phosphoserine). Polar residues-rich tracts occupy residues 242-253 (KSLSNKINNQAA) and 282-293 (RIQSDTVIQSTP). Threonine 292 carries the post-translational modification Phosphothreonine. A phosphoserine mark is found at serine 332 and serine 335. 2 stretches are compositionally biased toward polar residues: residues 375 to 396 (SLTS…NMTV) and 462 to 478 (EPPS…NNSP). 4 disordered regions span residues 375 to 416 (SLTS…DSSV), 453 to 486 (RNPP…SLQG), 522 to 579 (TNLK…ERKK), and 593 to 647 (RNFD…TLNL). 2 stretches are compositionally biased toward basic and acidic residues: residues 528–541 (NEND…SRRE) and 593–602 (RNFDLPSDHV). Positions 621 to 647 (KTETANITSEAPTTSEVTLENSETLNL) are enriched in polar residues.

It belongs to the shugoshin family.

It is found in the chromosome. It localises to the centromere. Involved in chromosome cohesion during mitosis and meiosis by preventing premature dissociation of cohesin complex from centromeres after prophase, when most of cohesin complex dissociates from chromosomes arms. Required for faithful mitotic chromosome segregation and proper kinetochore orientation during meiosis I. In contrast to sgo1, it is dispensable for centromeric protection of rec8 during meiosis I as well as protection of rad21 during mitosis. Required to sense the lack of tension at centromeres during mitosis. This is Shugoshin-2 (sgo2) from Schizosaccharomyces pombe (strain 972 / ATCC 24843) (Fission yeast).